A 245-amino-acid polypeptide reads, in one-letter code: Orotidine 5'-phosphate decarboxylase (245 aa).

Substrate is bound by residues aspartate 22, lysine 44, 71-80, threonine 131, arginine 192, glutamine 201, glycine 221, and arginine 222; that span reads DLKFHDIPNT. Lysine 73 (proton donor) is an active-site residue.

The protein belongs to the OMP decarboxylase family. Type 1 subfamily. Homodimer.

It carries out the reaction orotidine 5'-phosphate + H(+) = UMP + CO2. Its pathway is pyrimidine metabolism; UMP biosynthesis via de novo pathway; UMP from orotate: step 2/2. Its function is as follows. Catalyzes the decarboxylation of orotidine 5'-monophosphate (OMP) to uridine 5'-monophosphate (UMP). The polypeptide is Orotidine 5'-phosphate decarboxylase (Shigella boydii serotype 18 (strain CDC 3083-94 / BS512)).